A 162-amino-acid chain; its full sequence is NADH-quinone oxidoreductase subunit I (162 aa).

2 consecutive 4Fe-4S ferredoxin-type domains span residues 53–83 and 93–122; these read LRRYANGEERCIACKLCEAVCPALAITIEAE and TRYDIDMTKCIYCGLCEEACPVDAIVEGPN. 8 residues coordinate [4Fe-4S] cluster: cysteine 63, cysteine 66, cysteine 69, cysteine 73, cysteine 102, cysteine 105, cysteine 108, and cysteine 112.

Belongs to the complex I 23 kDa subunit family. In terms of assembly, NDH-1 is composed of 14 different subunits. Subunits NuoA, H, J, K, L, M, N constitute the membrane sector of the complex. [4Fe-4S] cluster serves as cofactor.

Its subcellular location is the cell inner membrane. The enzyme catalyses a quinone + NADH + 5 H(+)(in) = a quinol + NAD(+) + 4 H(+)(out). NDH-1 shuttles electrons from NADH, via FMN and iron-sulfur (Fe-S) centers, to quinones in the respiratory chain. The immediate electron acceptor for the enzyme in this species is believed to be ubiquinone. Couples the redox reaction to proton translocation (for every two electrons transferred, four hydrogen ions are translocated across the cytoplasmic membrane), and thus conserves the redox energy in a proton gradient. The chain is NADH-quinone oxidoreductase subunit I from Granulibacter bethesdensis (strain ATCC BAA-1260 / CGDNIH1).